A 501-amino-acid polypeptide reads, in one-letter code: Solute carrier family 2, facilitated glucose transporter member 5 (501 aa).

Met-1 carries the post-translational modification N-acetylmethionine. Topologically, residues 1–18 are cytoplasmic; the sequence is MEPQDPVKREGRLTPVIV. A helical transmembrane segment spans residues 19-39; it reads LATLIAAFGSSFQYGYNVAAI. Tyr-32 contributes to the D-fructose binding site. The Extracellular portion of the chain corresponds to 40–68; it reads NSPSEFMKDFYNYTYYDRVGEYMNEFYLT. Asn-51 is a glycosylation site (N-linked (GlcNAc...) asparagine). A helical membrane pass occupies residues 69–91; sequence LLWSVTVSMFPFGGFLGSLMVGP. Topologically, residues 92 to 98 are cytoplasmic; sequence LVNNLGR. A helical membrane pass occupies residues 99 to 119; it reads KGTLLFNNIFSIVPALLMGFS. At 120–126 the chain is on the extracellular side; that stretch reads ELAKSFE. A helical transmembrane segment spans residues 127–149; that stretch reads MIIVARVLVGICAGLSSNVVPMY. Topologically, residues 150–161 are cytoplasmic; sequence LGELAPKNWRGA. The chain crosses the membrane as a helical span at residues 162-182; sequence LGVVPQLFITIGILVAQIFGL. Gln-167 contributes to the D-fructose binding site. The Extracellular segment spans residues 183–192; the sequence is RSLLANEEGW. Residues 193-213 traverse the membrane as a helical segment; it reads PILLGLTGIPAVLQLLFLPFF. Residues 214-277 are Cytoplasmic-facing; the sequence is PESPRYLLIQ…LFKMRSLRWQ (64 aa). Residues 278-298 traverse the membrane as a helical segment; the sequence is VISIIVLMAGQQLSGVNAIYY. D-fructose-binding positions include Gln-288 and 296–298; that span reads IYY. The Extracellular portion of the chain corresponds to 299–313; sequence YADQIYLSAGVNEDD. A helical transmembrane segment spans residues 314 to 334; that stretch reads VQYVTAGTGAVNVLITVCAIF. Residues 335–342 are Cytoplasmic-facing; sequence VVELMGRR. The chain crosses the membrane as a helical span at residues 343–363; sequence FLLLLGFSVCFTACCVLTGAL. The Extracellular portion of the chain corresponds to 364-371; sequence ALQDVISW. A helical transmembrane segment spans residues 372 to 394; the sequence is MPYVSIACVISYVIGHALGPSPI. His-387 provides a ligand contact to D-fructose. Over 395–412 the chain is Cytoplasmic; the sequence is PALLVTEIFLQSSRPAAY. Residues 413–433 form a helical membrane-spanning segment; that stretch reads MVAGTVHWLSNFTVGLVFPFI. 419-420 provides a ligand contact to D-fructose; that stretch reads HW. At 434 to 439 the chain is on the extracellular side; it reads QVGLGA. A helical membrane pass occupies residues 440-460; it reads YSFVIFAVICLLTTVYIFLII. Residues 461 to 501 lie on the Cytoplasmic side of the membrane; the sequence is PETKSKTFIEINRIFIKMNKVPGVHPEKEELKEFPPSTARQ.

It belongs to the major facilitator superfamily. Sugar transporter (TC 2.A.1.1) family. Glucose transporter subfamily.

The protein resides in the apical cell membrane. It is found in the cell membrane. It localises to the sarcolemma. It catalyses the reaction D-fructose(out) = D-fructose(in). In terms of biological role, functions as a fructose transporter that has only low activity with other monosaccharides. Can mediate the uptake of deoxyglucose, but with low efficiency. Essential for fructose uptake in the small intestine. Plays a role in the regulation of salt uptake and blood pressure in response to dietary fructose. Required for the development of high blood pressure in response to high dietary fructose intake. The protein is Solute carrier family 2, facilitated glucose transporter member 5 of Bos taurus (Bovine).